A 101-amino-acid polypeptide reads, in one-letter code: MEKSALIFIGILLFSTCTSIMARTGYVSCKTNSDCVKLKCPTPFGGPKCISGSCECPFKELMTLPNDTNYGVAACIDYCKAKGEIVYACILNHCYSYKPPM.

An N-terminal signal peptide occupies residues 1-22 (MEKSALIFIGILLFSTCTSIMA). Intrachain disulfides connect Cys29/Cys49, Cys35/Cys54, and Cys40/Cys56.

This sequence belongs to the DEFL family.

The protein localises to the secreted. The sequence is that of Putative defensin-like protein 307 from Arabidopsis thaliana (Mouse-ear cress).